A 616-amino-acid chain; its full sequence is Sialic acid TRAP transporter permease protein SiaT (616 aa).

The segment at 1 to 190 is TRAP transporter small permease; sequence MKYINKLEEW…RISNYIKLGS (190 aa). The next 17 membrane-spanning stretches (helical) occupy residues 9 to 29, 36 to 56, 83 to 103, 117 to 137, 153 to 173, 195 to 215, 244 to 264, 288 to 308, 332 to 352, 357 to 377, 407 to 427, 431 to 451, 459 to 479, 505 to 525, 527 to 547, 552 to 572, and 587 to 607; these read EWLG…QILS, PLIW…MLGI, TNTF…HFGI, GGIS…LMMF, YLPA…LFFA, IALL…WSLF, FPLL…TGGI, IGAS…AGGL, ASCI…YGVI, IAKL…ALMA, FWAI…LFSP, AIVA…ELTL, IEAM…TFFG, VLVM…ALAL, FLVL…LIFF, TLNM…FVVA, and LPFL…PQII. The segment at 191–616 is TRAP transporter large permease; it reads SSVYIALLVW…ITFVPNLLIP (426 aa).

This sequence in the N-terminal section; belongs to the TRAP transporter small permease family. The protein in the C-terminal section; belongs to the TRAP transporter large permease family. As to quaternary structure, the complex comprises the extracytoplasmic solute receptor protein SiaP, and the fused transmembrane protein SiaT.

It localises to the cell inner membrane. Functionally, part of the tripartite ATP-independent periplasmic (TRAP) transport system SiaPT involved in the uptake of sialic acid. This chain is Sialic acid TRAP transporter permease protein SiaT (siaT), found in Haemophilus influenzae (strain 86-028NP).